Here is a 154-residue protein sequence, read N- to C-terminus: Superoxide dismutase [Cu-Zn] (154 aa).

Cu cation contacts are provided by His47, His49, and His64. Cys58 and Cys147 are disulfide-bonded. His64, His72, His81, and Asp84 together coordinate Zn(2+). Residue His121 participates in Cu cation binding. Positions 126 to 137 (DLGRGGNEESKK) are enriched in basic and acidic residues. The tract at residues 126-147 (DLGRGGNEESKKTGNAGPRPAC) is disordered.

It belongs to the Cu-Zn superoxide dismutase family. In terms of assembly, homodimer. The cofactor is Cu cation. Zn(2+) serves as cofactor.

The protein resides in the cytoplasm. The catalysed reaction is 2 superoxide + 2 H(+) = H2O2 + O2. In terms of biological role, destroys radicals which are normally produced within the cells and which are toxic to biological systems. Plays an important role in the phase transition, and may be important in vivo, as it would facilitate the intracellular survival of the fungus by providing a non-toxic environment in the macrophage phagolysosomes. The chain is Superoxide dismutase [Cu-Zn] from Talaromyces marneffei (Penicillium marneffei).